A 1503-amino-acid chain; its full sequence is ABC multidrug transporter MDR3 (1503 aa).

Residues 1 to 46 form a disordered region; sequence MAPTEEANVTKPTGELRPDEKLNYEEDVKCSGSSSTTVGKTAYDTD. Asparagine 8 carries an N-linked (GlcNAc...) asparagine glycan. Basic and acidic residues predominate over residues 14 to 29; sequence GELRPDEKLNYEEDVK. The ABC transporter 1 domain maps to 153 to 408; that stretch reads LKAWSGIMSM…FIEMGFDCPS (256 aa). N-linked (GlcNAc...) asparagine glycosylation is found at asparagine 332 and asparagine 463. The next 5 membrane-spanning stretches (helical) occupy residues 519–539, 554–574, 599–619, 628–648, and 662–682; these read MTLTSIIGNIAMSLIIASVFY, LLFFAILMNAFASSLEILTLW, ILVDMPAKLAVAIVFNLIIYF, GHFFIFFLFSFTTTLTMSNVF, and LVPTSIFMLALVIYTGFTIPV. N-linked (GlcNAc...) asparagine glycosylation occurs at asparagine 729. The helical transmembrane segment at 771-791 threads the bilayer; that stretch reads GIIVAFFLFFLFVYITATELV. The segment at 816–838 is disordered; it reads KKKQDPEAASTQEKQPVETSGHD. Residues 824–833 show a composition bias toward polar residues; that stretch reads ASTQEKQPVE. Residues 850–1093 form the ABC transporter 2 domain; the sequence is FHWESVCYDI…LIEYFESKGA (244 aa). Position 886–893 (886–893) interacts with ATP; sequence GVSGAGKT. A run of 6 helical transmembrane segments spans residues 1186–1206, 1222–1242, 1259–1279, 1310–1330, 1346–1366, and 1458–1478; these read YIYSKACLAIVPTLFIGFTFY, IFMFMILFPNLVQQMMPYFVI, WIAFMISSVVVEIPWNALLTV, LLILIFLMFSSTFSSMVIAGI, LTLVFCGVLVSPTAMPGFWIF, and IGILFGYIAFNMVGAIGLYWL. Residue asparagine 1499 is glycosylated (N-linked (GlcNAc...) asparagine).

It belongs to the ABC transporter superfamily. ABCG family. PDR (TC 3.A.1.205) subfamily.

The protein localises to the cell membrane. The enzyme catalyses itraconazole(in) + ATP + H2O = itraconazole(out) + ADP + phosphate + H(+). It carries out the reaction voriconazole(in) + ATP + H2O = voriconazole(out) + ADP + phosphate + H(+). The catalysed reaction is fluconazole(in) + ATP + H2O = fluconazole(out) + ADP + phosphate + H(+). It catalyses the reaction (2R,4S)-ketoconazole(in) + ATP + H2O = (2R,4S)-ketoconazole(out) + ADP + phosphate + H(+). The enzyme catalyses (2S,4R)-ketoconazole(in) + ATP + H2O = (2S,4R)-ketoconazole(out) + ADP + phosphate + H(+). It carries out the reaction (R)-miconazole(in) + ATP + H2O = (R)-miconazole(out) + ADP + phosphate + H(+). The catalysed reaction is (S)-miconazole(in) + ATP + H2O = (S)-miconazole(out) + ADP + phosphate + H(+). With respect to regulation, azole transport activity is inhibited by milbemycin oxime. Pleiotropic ABC efflux transporter involved in the modulation susceptibility to azoles, including fluconazole, itraconazole, ketoconazole, miconazole and voriconazole. The chain is ABC multidrug transporter MDR3 from Trichophyton rubrum (strain ATCC MYA-4607 / CBS 118892) (Athlete's foot fungus).